A 564-amino-acid polypeptide reads, in one-letter code: Nucleolus and neural progenitor protein (564 aa).

The segment at 431–495 (GSRTSTSEHP…KRRCSGTVQR (65 aa)) is disordered. Residues 442–459 (RQRRSKYKVLSRQRKPQR) show a composition bias toward basic residues. The tract at residues 442-460 (RQRRSKYKVLSRQRKPQRK) is nuclear localization signal. Residues 460-473 (KLQSTLLKETQQVP) are compositionally biased toward polar residues.

This sequence belongs to the nepro family.

Its subcellular location is the nucleus. It localises to the nucleolus. In terms of biological role, may play a role in cortex development as part of the Notch signaling pathway. Downstream of Notch may repress the expression of proneural genes and inhibit neuronal differentiation thereby maintaining neural progenitors. May also play a role in preimplentation embryo development. The protein is Nucleolus and neural progenitor protein of Mus musculus (Mouse).